The primary structure comprises 76 residues: MKSGIHPDYHEINVIMTDGTEYKTRSCYAQPGATLRLDIDPKSHPAWTGVQRMLDTGGQVAKFNKKFGGLGRRAKA.

The protein belongs to the bacterial ribosomal protein bL31 family. Type A subfamily. In terms of assembly, part of the 50S ribosomal subunit.

Binds the 23S rRNA. The protein is Large ribosomal subunit protein bL31 of Gluconacetobacter diazotrophicus (strain ATCC 49037 / DSM 5601 / CCUG 37298 / CIP 103539 / LMG 7603 / PAl5).